The following is a 242-amino-acid chain: ATP-dependent dethiobiotin synthetase BioD 1 (242 aa).

An ATP-binding site is contributed by 12–17 (NVGKTT). A Mg(2+)-binding site is contributed by T16. K37 is an active-site residue. D66 is a binding site for ATP. Residues D66 and E124 each coordinate Mg(2+). Residues 184–185 (NR), 213–215 (PYL), and E220 contribute to the ATP site.

The protein belongs to the dethiobiotin synthetase family. In terms of assembly, homodimer. Mg(2+) serves as cofactor.

It is found in the cytoplasm. The catalysed reaction is (7R,8S)-7,8-diammoniononanoate + CO2 + ATP = (4R,5S)-dethiobiotin + ADP + phosphate + 3 H(+). Its pathway is cofactor biosynthesis; biotin biosynthesis; biotin from 7,8-diaminononanoate: step 1/2. Functionally, catalyzes a mechanistically unusual reaction, the ATP-dependent insertion of CO2 between the N7 and N8 nitrogen atoms of 7,8-diaminopelargonic acid (DAPA, also called 7,8-diammoniononanoate) to form a ureido ring. In Haemophilus influenzae (strain ATCC 51907 / DSM 11121 / KW20 / Rd), this protein is ATP-dependent dethiobiotin synthetase BioD 1.